We begin with the raw amino-acid sequence, 598 residues long: Arylsulfatase J (598 aa).

The signal sequence occupies residues 1–47 (MAPRDSAEPLPPLSPQAWAWSGKFLAMGALAGFSVLSLLTYGYLCWG). 3 residues coordinate Ca(2+): Asp82, Asp83, and Cys120. Cys120 serves as the catalytic Nucleophile. A 3-oxoalanine (Cys) modification is found at Cys120. Residue Asn155 is glycosylated (N-linked (GlcNAc...) asparagine). Lys174 lines the substrate pocket. Residue His176 is part of the active site. Residue His267 coordinates substrate. Asn304 and Asn316 each carry an N-linked (GlcNAc...) asparagine glycan. Positions 325 and 326 each coordinate Ca(2+). Lys343 contacts substrate. N-linked (GlcNAc...) asparagine glycans are attached at residues Asn429, Asn495, Asn525, and Asn563. Residues 532–598 (RYPPKDPRSN…IKCHPSVATG (67 aa)) form a disordered region. Basic residues predominate over residues 559-583 (KKKSNKTKAKKMQKKKSKARMRKQL).

This sequence belongs to the sulfatase family. Ca(2+) is required as a cofactor. The conversion to 3-oxoalanine (also known as C-formylglycine, FGly), of a serine or cysteine residue in prokaryotes and of a cysteine residue in eukaryotes, is critical for catalytic activity.

Its subcellular location is the secreted. The chain is Arylsulfatase J (Arsj) from Mus musculus (Mouse).